A 390-amino-acid chain; its full sequence is GTPase Obg (390 aa).

The Obg domain maps to 1 to 159; it reads MKFIDEALIR…RDLQLELMLL (159 aa). The OBG-type G domain maps to 160 to 333; the sequence is ADVGMLGLPN…LCRDIMDFIE (174 aa). Residues 166–173, 191–195, 213–216, 283–286, and 314–316 contribute to the GTP site; these read GLPNAGKS, FTTLV, DIPG, NKID, and SAV. Ser-173 and Thr-193 together coordinate Mg(2+). The interval 363-390 is disordered; that stretch reads DHQFEDEDEDWDDWSEEDEEGVETIYKP. Acidic residues predominate over residues 366–384; the sequence is FEDEDEDWDDWSEEDEEGV.

Belongs to the TRAFAC class OBG-HflX-like GTPase superfamily. OBG GTPase family. As to quaternary structure, monomer. The cofactor is Mg(2+).

The protein localises to the cytoplasm. Functionally, an essential GTPase which binds GTP, GDP and possibly (p)ppGpp with moderate affinity, with high nucleotide exchange rates and a fairly low GTP hydrolysis rate. Plays a role in control of the cell cycle, stress response, ribosome biogenesis and in those bacteria that undergo differentiation, in morphogenesis control. The sequence is that of GTPase Obg from Pasteurella multocida (strain Pm70).